A 255-amino-acid polypeptide reads, in one-letter code: Hydroxyacylglutathione hydrolase (255 aa).

Zn(2+) contacts are provided by H56, H58, D60, H61, H114, D133, and H171.

It belongs to the metallo-beta-lactamase superfamily. Glyoxalase II family. Monomer. Zn(2+) is required as a cofactor.

It catalyses the reaction an S-(2-hydroxyacyl)glutathione + H2O = a 2-hydroxy carboxylate + glutathione + H(+). It functions in the pathway secondary metabolite metabolism; methylglyoxal degradation; (R)-lactate from methylglyoxal: step 2/2. Thiolesterase that catalyzes the hydrolysis of S-D-lactoyl-glutathione to form glutathione and D-lactic acid. The polypeptide is Hydroxyacylglutathione hydrolase (Mesorhizobium japonicum (strain LMG 29417 / CECT 9101 / MAFF 303099) (Mesorhizobium loti (strain MAFF 303099))).